The following is a 419-amino-acid chain: Cyclin-B2-2 (419 aa).

Positions 79–116 (QPSSAPLAPIGSERQKRTADSAFHGPADMECTKITSDD) are disordered.

It belongs to the cyclin family. Cyclin AB subfamily. In terms of assembly, interacts with CDKB2-1. As to expression, expressed in the intercalary meristem and the elongation zone of internodes. Expressed in adventitious roots at all nodes under submergence conditions.

It localises to the nucleus. Functionally, involved in the control of the cell cycle at the G2/M (mitosis) transition. May associate to CDKB2-1 and activate CDKB2-1 kinase to promote cell division. This chain is Cyclin-B2-2 (CYCB2-2), found in Oryza sativa subsp. indica (Rice).